We begin with the raw amino-acid sequence, 167 residues long: Peptide deformylase (167 aa).

Cys91 and His133 together coordinate Fe cation. Glu134 is a catalytic residue. A Fe cation-binding site is contributed by His137.

This sequence belongs to the polypeptide deformylase family. Fe(2+) serves as cofactor.

The catalysed reaction is N-terminal N-formyl-L-methionyl-[peptide] + H2O = N-terminal L-methionyl-[peptide] + formate. Its function is as follows. Removes the formyl group from the N-terminal Met of newly synthesized proteins. Requires at least a dipeptide for an efficient rate of reaction. N-terminal L-methionine is a prerequisite for activity but the enzyme has broad specificity at other positions. The sequence is that of Peptide deformylase from Pseudoalteromonas translucida (strain TAC 125).